The sequence spans 318 residues: NADH-ubiquinone oxidoreductase chain 1 (318 aa).

A run of 9 helical transmembrane segments spans residues 2 to 22 (FLTN…FLTL), 36 to 56 (GPNI…IKLF), 69 to 89 (LLFT…WIPL), 100 to 120 (LGML…LWSG), 130 to 152 (IGAL…ILLH), 171 to 191 (HIWL…STLA), 217 to 237 (AGPF…MNAL), 254 to 273 (LYST…FLWI), and 294 to 314 (LPLT…LTSI).

Belongs to the complex I subunit 1 family.

It localises to the mitochondrion inner membrane. It carries out the reaction a ubiquinone + NADH + 5 H(+)(in) = a ubiquinol + NAD(+) + 4 H(+)(out). Functionally, core subunit of the mitochondrial membrane respiratory chain NADH dehydrogenase (Complex I) that is believed to belong to the minimal assembly required for catalysis. Complex I functions in the transfer of electrons from NADH to the respiratory chain. The immediate electron acceptor for the enzyme is believed to be ubiquinone. The chain is NADH-ubiquinone oxidoreductase chain 1 (MT-ND1) from Cyclopes didactylus (Silky anteater).